Consider the following 99-residue polypeptide: Small ribosomal subunit protein bS20 (99 aa).

This sequence belongs to the bacterial ribosomal protein bS20 family.

Its function is as follows. Binds directly to 16S ribosomal RNA. The chain is Small ribosomal subunit protein bS20 from Thermomicrobium roseum (strain ATCC 27502 / DSM 5159 / P-2).